Here is a 283-residue protein sequence, read N- to C-terminus: Pantothenate synthetase (283 aa).

Position 26–33 (26–33 (MGNLHEGH)) interacts with ATP. The active-site Proton donor is the H33. (R)-pantoate is bound at residue Q57. Residue Q57 participates in beta-alanine binding. 144–147 (GKKD) is a binding site for ATP. Q150 provides a ligand contact to (R)-pantoate. ATP is bound by residues V173 and 181–184 (LSSR).

The protein belongs to the pantothenate synthetase family. As to quaternary structure, homodimer.

It localises to the cytoplasm. The enzyme catalyses (R)-pantoate + beta-alanine + ATP = (R)-pantothenate + AMP + diphosphate + H(+). Its pathway is cofactor biosynthesis; (R)-pantothenate biosynthesis; (R)-pantothenate from (R)-pantoate and beta-alanine: step 1/1. Catalyzes the condensation of pantoate with beta-alanine in an ATP-dependent reaction via a pantoyl-adenylate intermediate. In Ralstonia nicotianae (strain ATCC BAA-1114 / GMI1000) (Ralstonia solanacearum), this protein is Pantothenate synthetase.